Reading from the N-terminus, the 341-residue chain is Shk1 kinase-binding protein 15 (341 aa).

5 WD repeats span residues 33 to 70 (AHEG…QIAD), 77 to 114 (IANA…LVHT), 119 to 157 (SHKG…GGKV), 197 to 234 (SSKS…ILHE), and 237 to 274 (AHKK…VIEH). Residues 293–341 (NSEPKNVEDEAAKRQSLDSETSETSSESESESEYYSTSKQPPVKRTKHA) are disordered. The segment covering 297–309 (KNVEDEAAKRQSL) has biased composition (basic and acidic residues).

Functionally, negatively regulates pak1/shk1 kinase activity leading to proper execution of cytoskeletal remodeling and cytokinetic functions. Its function is as follows. Interacts with pak1/shk1. The sequence is that of Shk1 kinase-binding protein 15 (skb15) from Schizosaccharomyces pombe (strain 972 / ATCC 24843) (Fission yeast).